The sequence spans 38 residues: Photosystem II reaction center protein L (38 aa).

Residues 17 to 37 form a helical membrane-spanning segment; it reads SLYWGLLLIFVLAVLFSSYIF.

The protein belongs to the PsbL family. In terms of assembly, PSII is composed of 1 copy each of membrane proteins PsbA, PsbB, PsbC, PsbD, PsbE, PsbF, PsbH, PsbI, PsbJ, PsbK, PsbL, PsbM, PsbT, PsbY, PsbZ, Psb30/Ycf12, at least 3 peripheral proteins of the oxygen-evolving complex and a large number of cofactors. It forms dimeric complexes.

Its subcellular location is the plastid. It is found in the chloroplast thylakoid membrane. Its function is as follows. One of the components of the core complex of photosystem II (PSII). PSII is a light-driven water:plastoquinone oxidoreductase that uses light energy to abstract electrons from H(2)O, generating O(2) and a proton gradient subsequently used for ATP formation. It consists of a core antenna complex that captures photons, and an electron transfer chain that converts photonic excitation into a charge separation. This subunit is found at the monomer-monomer interface and is required for correct PSII assembly and/or dimerization. The sequence is that of Photosystem II reaction center protein L from Bigelowiella natans (Pedinomonas minutissima).